The following is a 426-amino-acid chain: Enolase (426 aa).

Gln165 is a binding site for (2R)-2-phosphoglycerate. Catalysis depends on Glu207, which acts as the Proton donor. The Mg(2+) site is built by Asp244, Glu285, and Asp312. Residues Lys337, Arg366, Ser367, and Lys388 each coordinate (2R)-2-phosphoglycerate. Lys337 serves as the catalytic Proton acceptor.

This sequence belongs to the enolase family. It depends on Mg(2+) as a cofactor.

The protein localises to the cytoplasm. It is found in the secreted. It localises to the cell surface. It catalyses the reaction (2R)-2-phosphoglycerate = phosphoenolpyruvate + H2O. Its pathway is carbohydrate degradation; glycolysis; pyruvate from D-glyceraldehyde 3-phosphate: step 4/5. Its function is as follows. Catalyzes the reversible conversion of 2-phosphoglycerate (2-PG) into phosphoenolpyruvate (PEP). It is essential for the degradation of carbohydrates via glycolysis. The chain is Enolase from Cyanothece sp. (strain PCC 7425 / ATCC 29141).